The chain runs to 413 residues: Sulfoquinovose isomerase (413 aa).

Residues Arg-55, Tyr-111, Asn-172, His-176, and Arg-238 each coordinate 6-sulfo-beta-D-quinovose. His-248 (proton donor/acceptor) is an active-site residue. Residues Glu-251, Gln-362, Gln-379, and His-383 each contribute to the 6-sulfo-beta-D-quinovose site. His-383 (proton donor/acceptor) is an active-site residue.

It belongs to the N-acylglucosamine 2-epimerase family. As to quaternary structure, homohexamer.

It catalyses the reaction 6-sulfo-beta-D-quinovose = 6-deoxy-6-sulfo-D-fructose. The catalysed reaction is 6-sulfo-beta-D-quinovose = 6-sulfo-D-rhamnose. With respect to regulation, significantly inhibited by Cu(2+), Fe(3+) and Co(2+). Partially inhibited by Mg(2+), Ca(2+) and Mn(2+). Also inhibited by ATP, ADP, dATP, TTP and GTP. Functionally, catalyzes the isomerization of sulfoquinovose (SQ) to 6-deoxy-6-sulfo-D-fructose (SF). Can also catalyze the interconversion of SQ and sulforhamnose (SR). Has a clear preference for beta-SQ and little-to-no activity on alpha-SQ. In vitro, can also catalyze the interconversion of mannose, fructose and glucose, or lyxose and xylulose, but has extremely low activity with glucose. The chain is Sulfoquinovose isomerase (yihS) from Escherichia coli (strain K12).